Reading from the N-terminus, the 930-residue chain is Protocadherin gamma-B6 (930 aa).

The first 30 residues, 1-30, serve as a signal peptide directing secretion; that stretch reads MGGSCAQRRRAGPRQVLFPLLLPLFYPTLS. Cadherin domains are found at residues 31–133, 134–242, 243–347, 348–452, 453–562, and 570–675; these read EPIR…APQF, DKKE…PPVF, SRDE…SPEI, IITS…APVF, DQTS…APRV, and DGSA…LPDL. The Extracellular segment spans residues 31-691; that stretch reads EPIRYSIPEE…SDPQAELQFY (661 aa). N-linked (GlcNAc...) asparagine glycosylation is found at N304, N419, and N545. A helical transmembrane segment spans residues 692 to 712; the sequence is LVVALALISVLFLLAVILAIA. At 713–930 the chain is on the cytoplasmic side; it reads LRLRRSLSPA…KKKSGKKEKK (218 aa). Disordered stretches follow at residues 791-839 and 900-930; these read PHGG…WPNN and ATLT…KEKK. Over residues 800–839 the composition is skewed to polar residues; the sequence is HPETLTSQAPPNTDWRFSQAQRPGTSGSQNGDDTGTWPNN. Residues 920–930 show a composition bias toward basic residues; that stretch reads NKKKSGKKEKK.

It localises to the cell membrane. Functionally, potential calcium-dependent cell-adhesion protein. May be involved in the establishment and maintenance of specific neuronal connections in the brain. The sequence is that of Protocadherin gamma-B6 (PCDHGB6) from Homo sapiens (Human).